A 135-amino-acid polypeptide reads, in one-letter code: UPF0299 membrane protein Spro_1570 (135 aa).

4 consecutive transmembrane segments (helical) span residues Leu-4–Ala-24, Ala-30–Leu-50, Gly-63–Met-83, and Leu-93–Tyr-113.

This sequence belongs to the UPF0299 family.

It localises to the cell inner membrane. The protein is UPF0299 membrane protein Spro_1570 of Serratia proteamaculans (strain 568).